The following is a 436-amino-acid chain: Mitochondrial distribution and morphology protein 12 (436 aa).

The SMP-LTD domain occupies 1-436; the sequence is MSIEVNWGTA…VFPSFYTFLI (436 aa). Residues 73-84 are compositionally biased toward acidic residues; it reads DEDGDSGSEISE. 3 disordered regions span residues 73–98, 184–275, and 352–380; these read DEDG…WDRT, AVAG…RMRE, and GSGS…PHQK. Basic and acidic residues predominate over residues 85–98; the sequence is ELQHRTHDNPWDRT. Composition is skewed to polar residues over residues 190–206 and 222–243; these read PFTT…QGNK and DSSN…SNRS. A compositionally biased stretch (basic and acidic residues) spans 244–255; that stretch reads SHPDGHPEHNDD. The span at 256–267 shows a compositional bias: polar residues; it reads PISSSENPLLQN.

The protein belongs to the MDM12 family. Component of the ER-mitochondria encounter structure (ERMES) or MDM complex, composed of mmm1, mdm10, mdm12 and mdm34. A mmm1 homodimer associates with one molecule of mdm12 on each side in a pairwise head-to-tail manner, and the SMP-LTD domains of mmm1 and mdm12 generate a continuous hydrophobic tunnel for phospholipid trafficking.

It is found in the mitochondrion outer membrane. The protein resides in the endoplasmic reticulum membrane. In terms of biological role, component of the ERMES/MDM complex, which serves as a molecular tether to connect the endoplasmic reticulum (ER) and mitochondria. Components of this complex are involved in the control of mitochondrial shape and protein biogenesis, and function in nonvesicular lipid trafficking between the ER and mitochondria. Mdm12 is required for the interaction of the ER-resident membrane protein mmm1 and the outer mitochondrial membrane-resident beta-barrel protein mdm10. The mdm12-mmm1 subcomplex functions in the major beta-barrel assembly pathway that is responsible for biogenesis of all mitochondrial outer membrane beta-barrel proteins, and acts in a late step after the SAM complex. The mdm10-mdm12-mmm1 subcomplex further acts in the TOM40-specific pathway after the action of the mdm12-mmm1 complex. Essential for establishing and maintaining the structure of mitochondria and maintenance of mtDNA nucleoids. This is Mitochondrial distribution and morphology protein 12 from Emericella nidulans (strain FGSC A4 / ATCC 38163 / CBS 112.46 / NRRL 194 / M139) (Aspergillus nidulans).